Consider the following 233-residue polypeptide: Biosynthetic peptidoglycan transglycosylase (233 aa).

The chain crosses the membrane as a helical span at residues 8-28 (LIALPVGIFIFFNAYVYGNII).

Belongs to the glycosyltransferase 51 family.

It is found in the cell inner membrane. It catalyses the reaction [GlcNAc-(1-&gt;4)-Mur2Ac(oyl-L-Ala-gamma-D-Glu-L-Lys-D-Ala-D-Ala)](n)-di-trans,octa-cis-undecaprenyl diphosphate + beta-D-GlcNAc-(1-&gt;4)-Mur2Ac(oyl-L-Ala-gamma-D-Glu-L-Lys-D-Ala-D-Ala)-di-trans,octa-cis-undecaprenyl diphosphate = [GlcNAc-(1-&gt;4)-Mur2Ac(oyl-L-Ala-gamma-D-Glu-L-Lys-D-Ala-D-Ala)](n+1)-di-trans,octa-cis-undecaprenyl diphosphate + di-trans,octa-cis-undecaprenyl diphosphate + H(+). The protein operates within cell wall biogenesis; peptidoglycan biosynthesis. Its function is as follows. Peptidoglycan polymerase that catalyzes glycan chain elongation from lipid-linked precursors. This Neisseria meningitidis serogroup C (strain 053442) protein is Biosynthetic peptidoglycan transglycosylase.